Consider the following 382-residue polypeptide: Galactokinase (382 aa).

Residue 34–37 participates in substrate binding; that stretch reads EHTD. 124–130 contributes to the ATP binding site; it reads GAGLSSS. Residues S130 and E162 each coordinate Mg(2+). D174 serves as the catalytic Proton acceptor. Y223 serves as a coordination point for substrate.

Belongs to the GHMP kinase family. GalK subfamily.

Its subcellular location is the cytoplasm. The enzyme catalyses alpha-D-galactose + ATP = alpha-D-galactose 1-phosphate + ADP + H(+). It participates in carbohydrate metabolism; galactose metabolism. Its function is as follows. Catalyzes the transfer of the gamma-phosphate of ATP to D-galactose to form alpha-D-galactose-1-phosphate (Gal-1-P). The polypeptide is Galactokinase (Salmonella paratyphi A (strain ATCC 9150 / SARB42)).